Reading from the N-terminus, the 699-residue chain is DNA topoisomerase 1 (699 aa).

2 stretches are compositionally biased toward basic and acidic residues: residues 1-15 (MAKSKVVEKDKKNEL) and 22-35 (IELKGQSKNEESKG). The tract at residues 1 to 37 (MAKSKVVEKDKKNELDNQSADIELKGQSKNEESKGGK) is disordered. The 109-residue stretch at 38-146 (KKVIIVESPA…NIITFTEITE (109 aa)) folds into the Toprim domain. The Mg(2+) site is built by E44 and D115. In terms of domain architecture, Topo IA-type catalytic spans 160 to 583 (DMNKVNAQLA…SFLKEFNKDL (424 aa)). The interaction with DNA stretch occupies residues 194-199 (SAGRVQ). Y324 acts as the O-(5'-phospho-DNA)-tyrosine intermediate in catalysis. Residues 601–624 (CEDCSGNYKLKVGKYGLYLHCPNC) form a C4-type zinc finger. The segment at 649–699 (QESQEENGEKNSVQSEESSANSGNRKFYRKRRTSGSKKSSTKSASSKAKKK) is disordered. The span at 661 to 672 (VQSEESSANSGN) shows a compositional bias: polar residues. Residues 674–683 (KFYRKRRTSG) are compositionally biased toward basic residues. Positions 684–699 (SKKSSTKSASSKAKKK) are enriched in low complexity.

The protein belongs to the type IA topoisomerase family. In terms of assembly, monomer. Mg(2+) serves as cofactor.

It carries out the reaction ATP-independent breakage of single-stranded DNA, followed by passage and rejoining.. In terms of biological role, releases the supercoiling and torsional tension of DNA, which is introduced during the DNA replication and transcription, by transiently cleaving and rejoining one strand of the DNA duplex. Introduces a single-strand break via transesterification at a target site in duplex DNA. The scissile phosphodiester is attacked by the catalytic tyrosine of the enzyme, resulting in the formation of a DNA-(5'-phosphotyrosyl)-enzyme intermediate and the expulsion of a 3'-OH DNA strand. The free DNA strand then undergoes passage around the unbroken strand, thus removing DNA supercoils. Finally, in the religation step, the DNA 3'-OH attacks the covalent intermediate to expel the active-site tyrosine and restore the DNA phosphodiester backbone. The chain is DNA topoisomerase 1 from Fervidobacterium islandicum.